The following is a 322-amino-acid chain: Corticotropin-releasing factor-binding protein (322 aa).

The first 24 residues, 1-24, serve as a signal peptide directing secretion; the sequence is MSPNFKLQCHFILILLTALRGESR. 5 disulfides stabilise this stretch: cysteine 60-cysteine 81, cysteine 104-cysteine 141, cysteine 183-cysteine 205, cysteine 237-cysteine 264, and cysteine 277-cysteine 318. Asparagine 204 carries an N-linked (GlcNAc...) asparagine glycan.

It belongs to the CRF-binding protein family.

The protein resides in the secreted. Functionally, binds CRF and inactivates it. May prevent inappropriate pituitary-adrenal stimulation in pregnancy. This chain is Corticotropin-releasing factor-binding protein (Crhbp), found in Mus musculus (Mouse).